A 271-amino-acid chain; its full sequence is Elongation factor Ts (271 aa).

The interval threonine 76 to valine 79 is involved in Mg(2+) ion dislocation from EF-Tu.

It belongs to the EF-Ts family.

The protein localises to the cytoplasm. Associates with the EF-Tu.GDP complex and induces the exchange of GDP to GTP. It remains bound to the aminoacyl-tRNA.EF-Tu.GTP complex up to the GTP hydrolysis stage on the ribosome. The protein is Elongation factor Ts of Mycolicibacterium gilvum (strain PYR-GCK) (Mycobacterium gilvum (strain PYR-GCK)).